The following is a 1616-amino-acid chain: Putative inactive phenolphthiocerol synthesis polyketide synthase type I Pks1 (1616 aa).

Positions 83 to 397 are acyltransferase; that stretch reads TVVVFPGQGA…GQVFTTGVPV (315 aa). S174 acts as the For acyltransferase activity in catalysis. The N-terminal hotdog fold stretch occupies residues 445–567; it reads HALLGAVVER…GMLGVAAAET (123 aa). Residues 445 to 605 form a dehydratase region; sequence HALLGAVVER…YAYGPAFQGL (161 aa). The PKS/mFAS DH domain occupies 445 to 719; the sequence is HALLGAVVER…TRPITAEQLR (275 aa). The active-site Proton acceptor; for dehydratase activity is H477. Residues 579-719 are C-terminal hotdog fold; sequence AESVDISDGY…TRPITAEQLR (141 aa). D640 acts as the Proton donor; for dehydratase activity in catalysis. The tract at residues 910 to 1215 is enoylreductase; the sequence is GTLEDLVIQP…QARHIGKVVL (306 aa). Residues 1040 to 1057 and 1229 to 1244 contribute to the NADP(+) site; these read VLIHAGTGGVGMAAVQLA and TVVITGATGAVGGVLA. The interval 1228–1409 is beta-ketoacyl reductase; it reads GTVVITGATG…SLAWGLWEQP (182 aa). A Carrier domain is found at 1514–1589; that stretch reads ELLVGLVCLQ…AVAEYVAQQM (76 aa). At S1549 the chain carries O-(pantetheine 4'-phosphoryl)serine. A compositionally biased stretch (polar residues) spans 1588 to 1604; it reads QMSGSRPTESGDPTSQV. Residues 1588–1616 form a disordered region; the sequence is QMSGSRPTESGDPTSQVVEPAAAEVSVHA.

Pantetheine 4'-phosphate is required as a cofactor.

It functions in the pathway lipid metabolism; fatty acid biosynthesis. May play a role in phthiocerol biosynthesis. The protein is Putative inactive phenolphthiocerol synthesis polyketide synthase type I Pks1 (pks1) of Mycobacterium tuberculosis (strain ATCC 25618 / H37Rv).